Reading from the N-terminus, the 201-residue chain is GTP cyclohydrolase 1 (201 aa).

Zn(2+)-binding residues include C90, H93, and C163.

Belongs to the GTP cyclohydrolase I family. Toroid-shaped homodecamer, composed of two pentamers of five dimers.

It carries out the reaction GTP + H2O = 7,8-dihydroneopterin 3'-triphosphate + formate + H(+). The protein operates within cofactor biosynthesis; 7,8-dihydroneopterin triphosphate biosynthesis; 7,8-dihydroneopterin triphosphate from GTP: step 1/1. The protein is GTP cyclohydrolase 1 (folE) of Streptomyces coelicolor (strain ATCC BAA-471 / A3(2) / M145).